Reading from the N-terminus, the 487-residue chain is Anthocyanidin 3-O-glucosyltransferase 5 (487 aa).

Histidine 22 serves as the catalytic Proton acceptor. Histidine 22 is a binding site for an anthocyanidin. Aspartate 119 acts as the Charge relay in catalysis. Positions 354, 369, 372, 373, 374, and 377 each coordinate UDP-alpha-D-glucose. Position 392 (alanine 392) interacts with an anthocyanidin. The UDP-alpha-D-glucose site is built by glutamate 393 and glutamine 394.

This sequence belongs to the UDP-glycosyltransferase family. In terms of tissue distribution, faintly expressed in cotyledons.

It carries out the reaction an anthocyanidin + UDP-alpha-D-glucose + H(+) = an anthocyanidin 3-O-beta-D-glucoside + UDP. It participates in pigment biosynthesis; anthocyanin biosynthesis. In the presence of other necessary color factors, this glycosylation reaction allows the accumulation of anthocyanin pigments. The sequence is that of Anthocyanidin 3-O-glucosyltransferase 5 (GT5) from Manihot esculenta (Cassava).